The following is a 588-amino-acid chain: Aspartate--tRNA ligase (588 aa).

Glu174 contributes to the L-aspartate binding site. The aspartate stretch occupies residues 198 to 201 (QLFK). Residue Arg220 coordinates L-aspartate. ATP-binding positions include 220 to 222 (RDE) and Gln229. L-aspartate is bound at residue His448. Residue Glu482 coordinates ATP. Arg489 is a binding site for L-aspartate. 534–537 (GIDR) contacts ATP.

This sequence belongs to the class-II aminoacyl-tRNA synthetase family. Type 1 subfamily. As to quaternary structure, homodimer.

It localises to the cytoplasm. The enzyme catalyses tRNA(Asp) + L-aspartate + ATP = L-aspartyl-tRNA(Asp) + AMP + diphosphate. Functionally, catalyzes the attachment of L-aspartate to tRNA(Asp) in a two-step reaction: L-aspartate is first activated by ATP to form Asp-AMP and then transferred to the acceptor end of tRNA(Asp). In Xanthomonas campestris pv. campestris (strain 8004), this protein is Aspartate--tRNA ligase.